The following is a 52-amino-acid chain: Unknown protein from spot 415 of 2D-PAGE of etiolated coleoptile (52 aa).

The chain is Unknown protein from spot 415 of 2D-PAGE of etiolated coleoptile from Zea mays (Maize).